A 366-amino-acid polypeptide reads, in one-letter code: MSQVRDTPVKLFGWTITPVSHDPYSSSSHVLPDSSSSSSSSSLSLRPHMMNNQSVTDNTSLKLSSNLNNESKETSENSDDQHSEITTITSEEEKTTELKKPDKILPCPRCNSADTKFCYYNNYNVNQPRHFCRKCQRYWTAGGSMRIVPVGSGRRKNKGWVSSDQYLHITSEDTDNYNSSSTKILSFESSDSLVTERPKHQSNEVKINAEPVSQEPNNFQGLLPPQASPVSPPWPYQYPPNPSFYHMPVYWGCAIPVWSTLDTSTCLGKRTRDETSHETVKESKNAFERTSLLLESQSIKNETSMATNNHVWYPVPMTREKTQEFSFFSNGAETKSSNNRFVPETYLNLQANPAAMARSMNFRESI.

Positions 22-103 (DPYSSSSHVL…KTTELKKPDK (82 aa)) are disordered. Low complexity-rich tracts occupy residues 25-45 (SSSS…SLSL) and 56-69 (TDNT…NLNN). 2 stretches are compositionally biased toward basic and acidic residues: residues 70 to 83 (ESKE…DQHS) and 91 to 103 (EEEK…KPDK). The segment at 105-159 (LPCPRCNSADTKFCYYNNYNVNQPRHFCRKCQRYWTAGGSMRIVPVGSGRRKNKG) adopts a Dof-type zinc-finger fold. Positions 107, 110, 132, and 135 each coordinate Zn(2+).

The protein localises to the nucleus. In terms of biological role, transcription factor that binds specifically to a 5'-AA[AG]G-3' consensus core sequence. This Arabidopsis thaliana (Mouse-ear cress) protein is Dof zinc finger protein DOF1.3 (DOF1.3).